The sequence spans 504 residues: Sucrose phosphorylase (504 aa).

Aspartate 50 provides a ligand contact to substrate. Sucrose-binding positions include histidine 88, 190–192, glutamate 232, 289–290, 342–345, and arginine 399; these read RLD, HD, and DLYQ. Aspartate 192 acts as the Nucleophile in catalysis. Residue glutamate 232 is the Proton donor of the active site.

This sequence belongs to the glycosyl hydrolase 13 family. Sucrose phosphorylase subfamily. In terms of assembly, homodimer.

It carries out the reaction sucrose + phosphate = D-fructose + alpha-D-glucose 1-phosphate. Its function is as follows. Catalyzes the reversible phosphorolysis of sucrose into alpha-D-glucose 1-phosphate (Glc1P) and D-fructose. Is involved in sucrose degradation. Also displays transglucosylation activity in vitro, by transferring the glucosyl moiety of Glc1P to a broad range of monomeric sugars, such as D- and L-arabinose, D- and L-arabitol, and xylitol. This chain is Sucrose phosphorylase, found in Bifidobacterium adolescentis (strain ATCC 15703 / DSM 20083 / NCTC 11814 / E194a).